The sequence spans 389 residues: Urea transporter 1 (389 aa).

The next 5 helical transmembrane spans lie at 53–73, 91–110, 116–136, 143–163, and 173–193; these read PVVLQFIDWILRGISQVVFVN, WWALTGWLGTVVSTLMALLL, LIASGLYGYNATLVGVLMAVF, FWWLLLPVCAMSMTCPIFSSA, and LPVFTLPFNMALSMYLSATGH. N211 carries N-linked (GlcNAc...) asparagine glycosylation. Transmembrane regions (helical) follow at residues 242-262, 281-301, 310-330, and 333-353; these read GGIFLGAILLSSPLMCLHAAI, IYFGLWGFNSSLACIAMGGMF, LLALGCALFTAYLGVGMANFM, and VGLPACTWPFCLATLLFLIMT.

The protein belongs to the urea transporter family. As to quaternary structure, homotrimer; each subunit contains a pore through which urea permeates. Identified in a complex with STOM. As to expression, detected in erythrocytes (at protein level). Expressed in spleen erythroblasts and tumoral kidney.

The protein localises to the cell membrane. The protein resides in the basolateral cell membrane. It carries out the reaction urea(in) = urea(out). With respect to regulation, inhibited by phloretin and para-chloromercuribenzene sulfonate. Functionally, mediates the transport of urea driven by a concentration gradient across the cell membrane of erythrocytes. Also mediates the transport of urea across the cell membrane of the renal inner medullary collecting duct which is critical to the urinary concentrating mechanism. Facilitates water transport in erythrocytes. The protein is Urea transporter 1 (SLC14A1) of Homo sapiens (Human).